A 64-amino-acid chain; its full sequence is Large ribosomal subunit protein bL35c (64 aa).

It belongs to the bacterial ribosomal protein bL35 family.

The protein resides in the plastid. The protein localises to the chloroplast. The chain is Large ribosomal subunit protein bL35c from Phaeodactylum tricornutum (strain CCAP 1055/1).